The primary structure comprises 478 residues: Serine/threonine-protein phosphatase T (478 aa).

TPR repeat units lie at residues 9–42 (ATALKVQGNKAFGQHEWPTAVDFYTQAIAKYDRE), 43–76 (PSFFSNRAQAHIKLEAYGFAIADATKALELDPAY), and 78–110 (KAYWRRALANTAILNYKDALRDFKVVAKREPNN). The interval 151–463 (AVDDSYDGVR…QVFEAVPHPD (313 aa)) is catalytic. The Mn(2+) site is built by Asp221, His223, Asp250, and Asn282. Residue His283 is the Proton donor/acceptor of the active site. The Mn(2+) site is built by His331 and His408.

The protein belongs to the PPP phosphatase family. PP-5 (PP-T) subfamily. Mg(2+) serves as cofactor. Requires Mn(2+) as cofactor.

The protein localises to the nucleus. The catalysed reaction is O-phospho-L-seryl-[protein] + H2O = L-seryl-[protein] + phosphate. The enzyme catalyses O-phospho-L-threonyl-[protein] + H2O = L-threonyl-[protein] + phosphate. Functionally, protein phosphatase that specifically binds to and dephosphorylates the molecular chaperone Hsp90. Dephosphorylation positively regulates the Hsp90 chaperone machinery. This Aspergillus oryzae (strain ATCC 42149 / RIB 40) (Yellow koji mold) protein is Serine/threonine-protein phosphatase T.